Reading from the N-terminus, the 540-residue chain is Chaperonin GroEL (540 aa).

ATP contacts are provided by residues 29-32 (TLGP), 86-90 (DGTTT), G413, 476-478 (NAA), and D492.

This sequence belongs to the chaperonin (HSP60) family. Forms a cylinder of 14 subunits composed of two heptameric rings stacked back-to-back. Interacts with the co-chaperonin GroES.

It localises to the cytoplasm. It catalyses the reaction ATP + H2O + a folded polypeptide = ADP + phosphate + an unfolded polypeptide.. Together with its co-chaperonin GroES, plays an essential role in assisting protein folding. The GroEL-GroES system forms a nano-cage that allows encapsulation of the non-native substrate proteins and provides a physical environment optimized to promote and accelerate protein folding. The chain is Chaperonin GroEL from Geobacillus thermodenitrificans (strain NG80-2).